We begin with the raw amino-acid sequence, 362 residues long: MKYTPLHKIHQQLGAKLVDFAGFEMPVQYDGILVEHKAVREAVGLFDVSHMGEFEVKGKGAKAFLQNMTTNDVESLCDGKAQYSLLLYEDGGVVDDLLVYKIADEHYFLIVNASNIEKDFDWLKQHQPDDEVVLENRSDELSLIAIQGPKAEAVLSKLTDVPLDAIKYYHFVFGDVCGKRTLISRTGYTGEAGFELCMANEHAEEIWHALIEAGLPFGIVPVGLGARDTLRLEMGYSLYGHEIDHQTNPYEAQLGWITKLQKGDFIGKNACVEKKLHLEQTLVGFTLTGKNIPRQGYKIQDLSGTDIGVVCSGTLSPTLGKPIGTGYVKSSFSKIDSKVYINIRGKLQEAAVVKVPFLHKNR.

Belongs to the GcvT family. In terms of assembly, the glycine cleavage system is composed of four proteins: P, T, L and H.

The enzyme catalyses N(6)-[(R)-S(8)-aminomethyldihydrolipoyl]-L-lysyl-[protein] + (6S)-5,6,7,8-tetrahydrofolate = N(6)-[(R)-dihydrolipoyl]-L-lysyl-[protein] + (6R)-5,10-methylene-5,6,7,8-tetrahydrofolate + NH4(+). The glycine cleavage system catalyzes the degradation of glycine. This Chloroherpeton thalassium (strain ATCC 35110 / GB-78) protein is Aminomethyltransferase.